A 332-amino-acid chain; its full sequence is ADP-L-glycero-D-manno-heptose-6-epimerase (332 aa).

Residues 13 to 14 (FI), 34 to 35 (DN), Lys-41, Lys-56, 78 to 82 (EGACS), and Asn-95 contribute to the NADP(+) site. The active-site Proton acceptor is the Tyr-142. Lys-146 contributes to the NADP(+) binding site. Asn-171 serves as a coordination point for substrate. Residues Val-172 and Lys-180 each contribute to the NADP(+) site. Lys-180 (proton acceptor) is an active-site residue. Residues Arg-182, His-189, 203–206 (FEGC), Arg-216, and Tyr-295 contribute to the substrate site.

The protein belongs to the NAD(P)-dependent epimerase/dehydratase family. HldD subfamily. In terms of assembly, homopentamer. It depends on NADP(+) as a cofactor.

It catalyses the reaction ADP-D-glycero-beta-D-manno-heptose = ADP-L-glycero-beta-D-manno-heptose. It participates in nucleotide-sugar biosynthesis; ADP-L-glycero-beta-D-manno-heptose biosynthesis; ADP-L-glycero-beta-D-manno-heptose from D-glycero-beta-D-manno-heptose 7-phosphate: step 4/4. Functionally, catalyzes the interconversion between ADP-D-glycero-beta-D-manno-heptose and ADP-L-glycero-beta-D-manno-heptose via an epimerization at carbon 6 of the heptose. This is ADP-L-glycero-D-manno-heptose-6-epimerase from Thiobacillus denitrificans (strain ATCC 25259 / T1).